A 920-amino-acid polypeptide reads, in one-letter code: Plasma membrane ATPase (920 aa).

Over residues 1-11 (MSDERITEKPP) the composition is skewed to basic and acidic residues. Residues 1–71 (MSDERITEKP…AEEDDGPAAA (71 aa)) form a disordered region. Over 1-117 (MSDERITEKP…REESENLLVK (117 aa)) the chain is Cytoplasmic. Positions 17–50 (SEGEPVPEEEVEEETEEEVPDEQSSEDDDIDGLI) are enriched in acidic residues. The helical transmembrane segment at 118–138 (FLMFFIGPIQFVMEAAAVLAA) threads the bilayer. At 139-142 (GLED) the chain is on the extracellular side. The chain crosses the membrane as a helical span at residues 143–162 (WVDFGVICGLLFLNAGVGFI). At 163–293 (QEFQAGSIVE…GQGHFTEVLN (131 aa)) the chain is on the cytoplasmic side. Residues 294–315 (GIGVILLVLVVITLLLIWTACF) traverse the membrane as a helical segment. Topologically, residues 316–326 (YRTVRIVPILR) are extracellular. The chain crosses the membrane as a helical span at residues 327 to 349 (YTLGITIVGVPVGLPAVVTTTMA). Over 350-721 (GGAAYLAKKQ…IAILNHSLDI (372 aa)) the chain is Cytoplasmic. The active-site 4-aspartylphosphate intermediate is the aspartate 380. Positions 636 and 640 each coordinate Mg(2+). Residues 722–740 (DLIVFIAIFADVATLAIAY) form a helical membrane-spanning segment. The Extracellular segment spans residues 741–756 (DNAPFSPSPVKWNLPR). The chain crosses the membrane as a helical span at residues 757 to 776 (LWGMSIMMGIILAAGTWITL). Topologically, residues 777–826 (TTMFLPKGGIIQNFGSIDGILFLEISLTENWLIFITRAVGPFWSSIPSWQ) are cytoplasmic. The helical transmembrane segment at 827–847 (LAGAVFVVDVVATMFTLFGWW) threads the bilayer. Topologically, residues 848–859 (SQNWTDIVTVVR) are extracellular. The chain crosses the membrane as a helical span at residues 860-876 (IYIWSIGIFCCLGGAYY). Residues 877 to 920 (LMSESETFDRLMNGKPLKENKSTRSVEDFLASMRRVSTQHEKGN) are Cytoplasmic-facing.

Belongs to the cation transport ATPase (P-type) (TC 3.A.3) family. Type IIIA subfamily.

It localises to the cell membrane. It carries out the reaction ATP + H2O + H(+)(in) = ADP + phosphate + 2 H(+)(out). Its function is as follows. The plasma membrane ATPase of plants and fungi is a hydrogen ion pump. The proton gradient it generates drives the active transport of nutrients by H(+)-symport. The resulting external acidification and/or internal alkinization may mediate growth responses. This chain is Plasma membrane ATPase, found in Zygosaccharomyces rouxii.